The sequence spans 495 residues: Glycerol kinase (495 aa).

T11 provides a ligand contact to ADP. 3 residues coordinate ATP: T11, T12, and S13. T11 contributes to the sn-glycerol 3-phosphate binding site. R15 serves as a coordination point for ADP. Positions 81, 82, 133, and 242 each coordinate sn-glycerol 3-phosphate. The glycerol site is built by R81, E82, Y133, D242, and Q243. The ADP site is built by T264 and G307. Residues T264, G307, Q311, and G408 each coordinate ATP. ADP is bound by residues G408 and N412.

The protein belongs to the FGGY kinase family.

It catalyses the reaction glycerol + ATP = sn-glycerol 3-phosphate + ADP + H(+). It functions in the pathway polyol metabolism; glycerol degradation via glycerol kinase pathway; sn-glycerol 3-phosphate from glycerol: step 1/1. Inhibited by fructose 1,6-bisphosphate (FBP). In terms of biological role, key enzyme in the regulation of glycerol uptake and metabolism. Catalyzes the phosphorylation of glycerol to yield sn-glycerol 3-phosphate. The sequence is that of Glycerol kinase from Citrifermentans bemidjiense (strain ATCC BAA-1014 / DSM 16622 / JCM 12645 / Bem) (Geobacter bemidjiensis).